The following is a 340-amino-acid chain: UDP-3-O-acylglucosamine N-acyltransferase (340 aa).

H238 (proton acceptor) is an active-site residue.

The protein belongs to the transferase hexapeptide repeat family. LpxD subfamily. In terms of assembly, homotrimer.

It catalyses the reaction a UDP-3-O-[(3R)-3-hydroxyacyl]-alpha-D-glucosamine + a (3R)-hydroxyacyl-[ACP] = a UDP-2-N,3-O-bis[(3R)-3-hydroxyacyl]-alpha-D-glucosamine + holo-[ACP] + H(+). It participates in bacterial outer membrane biogenesis; LPS lipid A biosynthesis. Catalyzes the N-acylation of UDP-3-O-acylglucosamine using 3-hydroxyacyl-ACP as the acyl donor. Is involved in the biosynthesis of lipid A, a phosphorylated glycolipid that anchors the lipopolysaccharide to the outer membrane of the cell. The sequence is that of UDP-3-O-acylglucosamine N-acyltransferase from Psychromonas ingrahamii (strain DSM 17664 / CCUG 51855 / 37).